The sequence spans 525 residues: Asparagine synthetase domain-containing protein YML096W (525 aa).

The active-site For GATase activity is the Cys-2. Positions 2–209 (CGILLHYCPN…LNSNQRSHLP (208 aa)) constitute a Glutamine amidotransferase type-2 domain. The region spanning 210-523 (YEVTSEIDLN…GTDLLKENRN (314 aa)) is the Asparagine synthetase domain. A disordered region spans residues 503 to 525 (SAKMTKDGNKHGTDLLKENRNCS). The span at 506-525 (MTKDGNKHGTDLLKENRNCS) shows a compositional bias: basic and acidic residues.

The protein localises to the cytoplasm. The sequence is that of Asparagine synthetase domain-containing protein YML096W from Saccharomyces cerevisiae (strain ATCC 204508 / S288c) (Baker's yeast).